The following is a 182-amino-acid chain: Large ribosomal subunit protein uL16 (182 aa).

The protein belongs to the universal ribosomal protein uL16 family.

The chain is Large ribosomal subunit protein uL16 from Pyrobaculum neutrophilum (strain DSM 2338 / JCM 9278 / NBRC 100436 / V24Sta) (Thermoproteus neutrophilus).